The chain runs to 364 residues: Peptide chain release factor 1 (364 aa).

The residue at position 237 (glutamine 237) is an N5-methylglutamine.

Belongs to the prokaryotic/mitochondrial release factor family. In terms of processing, methylated by PrmC. Methylation increases the termination efficiency of RF1.

Its subcellular location is the cytoplasm. Peptide chain release factor 1 directs the termination of translation in response to the peptide chain termination codons UAG and UAA. This chain is Peptide chain release factor 1, found in Mycoplasma mycoides subsp. mycoides SC (strain CCUG 32753 / NCTC 10114 / PG1).